The following is a 99-amino-acid chain: Protein AC4 (99 aa).

Belongs to the geminiviridae protein AC4/C4 family.

In terms of biological role, pathogenicity determinant. May act as a suppressor of RNA-mediated gene silencing, also known as post-transcriptional gene silencing (PTGS), a mechanism of plant viral defense that limits the accumulation of viral RNAs. This is Protein AC4 from Glycine max (Soybean).